A 244-amino-acid polypeptide reads, in one-letter code: 7-cyano-7-deazaguanine synthase (244 aa).

14-24 (FSGGQDSATCV) serves as a coordination point for ATP. Residues cysteine 202, cysteine 217, cysteine 220, and cysteine 223 each coordinate Zn(2+).

The protein belongs to the QueC family. Zn(2+) serves as cofactor.

The catalysed reaction is 7-carboxy-7-deazaguanine + NH4(+) + ATP = 7-cyano-7-deazaguanine + ADP + phosphate + H2O + H(+). The protein operates within purine metabolism; 7-cyano-7-deazaguanine biosynthesis. In terms of biological role, catalyzes the ATP-dependent conversion of 7-carboxy-7-deazaguanine (CDG) to 7-cyano-7-deazaguanine (preQ(0)). The sequence is that of 7-cyano-7-deazaguanine synthase from Burkholderia vietnamiensis (strain G4 / LMG 22486) (Burkholderia cepacia (strain R1808)).